Reading from the N-terminus, the 107-residue chain is U-scoloptoxin(18)-Er1a (107 aa).

Positions 1–21 are cleaved as a signal peptide; the sequence is MQRFLCLVACSVVLLVLGIVA.

Belongs to the scoloptoxin-18 family. In terms of processing, contains 5 disulfide bonds. As to expression, expressed by the venom gland.

The protein localises to the secreted. This is U-scoloptoxin(18)-Er1a from Ethmostigmus rubripes (Giant centipede).